We begin with the raw amino-acid sequence, 199 residues long: MDIELVAQTRTKSGKGPARALRRNEMVPAVLYGPKAETVSLSVPRQRLERLLRDMGEESKLLRLTVEGDGTAEMKQVLIREVQVHPVRRRFLHVDFYEVPLDHPIVVEVPVELLGEPVGVKKGGTLNLIQRMLSVRCLPGEIPEKVQVDVSKLDIGSSIQVEQLRTIVPFELTDDGGMAVVNVVAPEGAGKEDAEAAEE.

It belongs to the bacterial ribosomal protein bL25 family. CTC subfamily. Part of the 50S ribosomal subunit; part of the 5S rRNA/L5/L18/L25 subcomplex. Contacts the 5S rRNA. Binds to the 5S rRNA independently of L5 and L18.

Its function is as follows. This is one of the proteins that binds to the 5S RNA in the ribosome where it forms part of the central protuberance. The protein is Large ribosomal subunit protein bL25 of Syntrophobacter fumaroxidans (strain DSM 10017 / MPOB).